A 434-amino-acid chain; its full sequence is MPSEILLKIFSYLDAVSLLCAGCVSRRFYHLANDNFIWIRIYSTAFSPTRSNWKVNSVEKIAVSVSFLSVQDKEAGYWKKEYITKQIASVKAALADILKPVNPYTGLPVKTKEALRMFGLGWAIILKEKSGKEYIMEHVDLSVNDTSVTVIWYGKNWPCLASLSTLDLCGVTPVFMDWYKTPTKHRLRWHSLIAKYNLSHLTVSTMIGCDRLIRIFCLHPGLLVGVWKKEEELAFVMANLHFHHLVERSTLGSATIPYELPPHSPFLDDSPEYGLHGYQLHVDLHSGGVFYLCGTFRNLFTKKGNIENGHVKLIVIHLKNNREHLPLIGKVGLSWKTDILDGCIKSCSMMDVTLLDEHGKPFWCFSSPVCMRSPATPADGPSFLGQTYSVDYVDAEGRVHVELVWIRETEEYLIVNLVLYLSIAKINRWFGTEY.

An F-box domain is found at 1 to 41 (MPSEILLKIFSYLDAVSLLCAGCVSRRFYHLANDNFIWIRI).

Directly interacts with SKP1 and CUL1.

In terms of biological role, substrate-recognition component of the SCF (SKP1-CUL1-F-box protein)-type E3 ubiquitin ligase complex. The polypeptide is F-box only protein 15 (FBXO15) (Macaca fascicularis (Crab-eating macaque)).